We begin with the raw amino-acid sequence, 376 residues long: Homocitrate synthase (376 aa).

One can recognise a Pyruvate carboxyltransferase domain in the interval 4–259 (WKIIDSTLRE…RRKYKLEMLP (256 aa)). Arg-12 provides a ligand contact to 2-oxoglutarate. Glu-13 contributes to the Mg(2+) binding site. His-72 is a 2-oxoglutarate binding site. Asp-92 is an L-lysine binding site. Arg-133 provides a ligand contact to 2-oxoglutarate. Residues Ser-135 and Thr-166 each contribute to the L-lysine site. Position 166 (Thr-166) interacts with 2-oxoglutarate. Mg(2+) is bound by residues His-195 and His-197. His-292 functions as the Proton acceptor in the catalytic mechanism.

The protein belongs to the alpha-IPM synthase/homocitrate synthase family. Homocitrate synthase LYS20/LYS21 subfamily. Exists in an equilibrium between monomer and homodimer. Mg(2+) serves as cofactor. Mn(2+) is required as a cofactor.

The protein resides in the cytoplasm. The catalysed reaction is acetyl-CoA + 2-oxoglutarate + H2O = (2R)-homocitrate + CoA + H(+). It carries out the reaction oxaloacetate + acetyl-CoA + H2O = citrate + CoA + H(+). It participates in amino-acid biosynthesis; L-lysine biosynthesis via AAA pathway; L-alpha-aminoadipate from 2-oxoglutarate: step 1/5. Is highly and competitively inhibited by lysine that binds to the active site and competes with 2-oxoglutarate. Is also slightly inhibited by arginine and 2-aminoethylcysteine. Functionally, catalyzes the aldol-type condensation of 2-oxoglutarate with acetyl-CoA to yield homocitrate. Carries out the first step of the alpha-aminoadipate (AAA) lysine biosynthesis pathway. To a lesser extent, can also use oxaloacetate in place of 2-oxoglutarate, leading to citrate. Does not display 2-isopropylmalate synthase activity since it cannot use 2-oxoisovalerate. This is Homocitrate synthase from Thermus thermophilus (strain ATCC BAA-163 / DSM 7039 / HB27).